Here is a 496-residue protein sequence, read N- to C-terminus: Cytochrome P450 4ae1 (496 aa).

Cysteine 443 is a binding site for heme.

The protein belongs to the cytochrome P450 family. Requires heme as cofactor.

It localises to the endoplasmic reticulum membrane. The protein resides in the microsome membrane. Its function is as follows. May be involved in the metabolism of insect hormones and in the breakdown of synthetic insecticides. This Drosophila melanogaster (Fruit fly) protein is Cytochrome P450 4ae1 (Cyp4ae1).